The chain runs to 290 residues: ATP synthase gamma chain (290 aa).

It belongs to the ATPase gamma chain family. In terms of assembly, F-type ATPases have 2 components, CF(1) - the catalytic core - and CF(0) - the membrane proton channel. CF(1) has five subunits: alpha(3), beta(3), gamma(1), delta(1), epsilon(1). CF(0) has three main subunits: a, b and c.

The protein localises to the cell inner membrane. In terms of biological role, produces ATP from ADP in the presence of a proton gradient across the membrane. The gamma chain is believed to be important in regulating ATPase activity and the flow of protons through the CF(0) complex. In Gemmatimonas aurantiaca (strain DSM 14586 / JCM 11422 / NBRC 100505 / T-27), this protein is ATP synthase gamma chain.